Reading from the N-terminus, the 181-residue chain is MVVAYKLSNGLEVILENGDITKVEADAIVNAANSYLSHGGGVALAIVRSGGYIIQEESDEYVRRNGPVPVGEVAVTTAGKLKARYVIHAVGPRYGIEGDDKLESAIRRSLEKADELKLSSIALPAISTGIYGYPYEICARIMSKVMKEYKPKFLKRILVVVYGDQAYSVFKKVFDNSLYMN.

One can recognise a Macro domain in the interval 1–178; it reads MVVAYKLSNG…VFKKVFDNSL (178 aa).

This is an uncharacterized protein from Sulfolobus acidocaldarius (strain ATCC 33909 / DSM 639 / JCM 8929 / NBRC 15157 / NCIMB 11770).